A 394-amino-acid polypeptide reads, in one-letter code: Na(+)/H(+) antiporter NhaA (394 aa).

11 helical membrane passes run 14–34, 59–79, 95–115, 125–145, 154–174, 179–199, 213–233, 254–274, 292–312, 328–348, and 363–383; these read AGGL…NSAL, LLLW…GLEV, VFPA…YLLF, GWAI…ALLG, VFLL…IALF, VSLQ…YMNW, LVLW…GVIV, GLHP…NAGV, IATG…WLAV, IFAV…IASL, and LGIL…LRLV.

This sequence belongs to the NhaA Na(+)/H(+) (TC 2.A.33) antiporter family.

Its subcellular location is the cell inner membrane. It carries out the reaction Na(+)(in) + 2 H(+)(out) = Na(+)(out) + 2 H(+)(in). Functionally, na(+)/H(+) antiporter that extrudes sodium in exchange for external protons. This Yersinia pestis bv. Antiqua (strain Antiqua) protein is Na(+)/H(+) antiporter NhaA.